Reading from the N-terminus, the 308-residue chain is ATP synthase gamma chain (308 aa).

This sequence belongs to the ATPase gamma chain family. In terms of assembly, F-type ATPases have 2 components, CF(1) - the catalytic core - and CF(0) - the membrane proton channel. CF(1) has five subunits: alpha(3), beta(3), gamma(1), delta(1), epsilon(1). CF(0) has three main subunits: a, b and c.

Its subcellular location is the cell membrane. Its function is as follows. Produces ATP from ADP in the presence of a proton gradient across the membrane. The gamma chain is believed to be important in regulating ATPase activity and the flow of protons through the CF(0) complex. In Lacticaseibacillus paracasei (strain ATCC 334 / BCRC 17002 / CCUG 31169 / CIP 107868 / KCTC 3260 / NRRL B-441) (Lactobacillus paracasei), this protein is ATP synthase gamma chain.